Here is a 1402-residue protein sequence, read N- to C-terminus: DNA-directed RNA polymerase subunit beta' (1402 aa).

Zn(2+)-binding residues include C71, C73, C86, and C89. Mg(2+) is bound by residues D462, D464, and D466. C808, C881, C888, and C891 together coordinate Zn(2+).

The protein belongs to the RNA polymerase beta' chain family. As to quaternary structure, the RNAP catalytic core consists of 2 alpha, 1 beta, 1 beta' and 1 omega subunit. When a sigma factor is associated with the core the holoenzyme is formed, which can initiate transcription. The cofactor is Mg(2+). Requires Zn(2+) as cofactor.

The catalysed reaction is RNA(n) + a ribonucleoside 5'-triphosphate = RNA(n+1) + diphosphate. Functionally, DNA-dependent RNA polymerase catalyzes the transcription of DNA into RNA using the four ribonucleoside triphosphates as substrates. The sequence is that of DNA-directed RNA polymerase subunit beta' from Hyphomonas neptunium (strain ATCC 15444).